The sequence spans 53 residues: Mannose/glucose-specific lectin alpha 1 chain (53 aa).

It belongs to the leguminous lectin family. In terms of assembly, tetramer of two alpha and two beta chains.

This chain is Mannose/glucose-specific lectin alpha 1 chain, found in Lathyrus ochrus (Cyprus-vetch).